The sequence spans 154 residues: Myoglobin (154 aa).

The Globin domain maps to 2-148; the sequence is GLSDGEWQLV…FRKDMASNYK (147 aa). Ser-4 is modified (phosphoserine). His-65 is a binding site for nitrite. Position 65 (His-65) interacts with O2. At Thr-68 the chain carries Phosphothreonine. Position 94 (His-94) interacts with heme b.

This sequence belongs to the globin family. As to quaternary structure, monomeric.

The protein resides in the cytoplasm. It localises to the sarcoplasm. It carries out the reaction Fe(III)-heme b-[protein] + nitric oxide + H2O = Fe(II)-heme b-[protein] + nitrite + 2 H(+). The catalysed reaction is H2O2 + AH2 = A + 2 H2O. Its function is as follows. Monomeric heme protein which primary function is to store oxygen and facilitate its diffusion within muscle tissues. Reversibly binds oxygen through a pentacoordinated heme iron and enables its timely and efficient release as needed during periods of heightened demand. Depending on the oxidative conditions of tissues and cells, and in addition to its ability to bind oxygen, it also has a nitrite reductase activity whereby it regulates the production of bioactive nitric oxide. Under stress conditions, like hypoxia and anoxia, it also protects cells against reactive oxygen species thanks to its pseudoperoxidase activity. This Gorilla gorilla beringei (Mountain gorilla) protein is Myoglobin (MB).